The following is a 462-amino-acid chain: Sodium-coupled neutral amino acid transporter 7 (462 aa).

Ser28 carries the post-translational modification Phosphoserine. Helical transmembrane passes span 56–76 (AIFI…PAAF), 82–102 (VAAG…GLVI), 130–150 (LCEV…LIII), 178–198 (FTIS…REIG), 205–225 (FLSV…YIWP), 239–259 (ASWM…QCHV), 282–302 (AAMV…FLTF), 319–339 (MAVA…YPIL), 371–391 (VLQT…IPDI), 395–415 (ISVI…LCLI), and 428–448 (ASWW…AFIF).

It belongs to the amino acid/polyamine transporter 2 family. In terms of assembly, interacts with the mTORC1 complex; this interaction mediates the recruitment of mTORC1 to the lysosome and its subsequent activation.

It localises to the lysosome membrane. Its subcellular location is the cell projection. The protein resides in the axon. It catalyses the reaction L-asparagine(in) + Na(+)(in) = L-asparagine(out) + Na(+)(out). It carries out the reaction L-glutamine(in) + Na(+)(in) = L-glutamine(out) + Na(+)(out). Functionally, symporter that selectively cotransports sodium ions and amino acids, such as L-glutamine and L-asparagine from the lysosome into the cytoplasm and may participates in mTORC1 activation. The transport activity requires an acidic lysosomal lumen. The polypeptide is Sodium-coupled neutral amino acid transporter 7 (Homo sapiens (Human)).